The chain runs to 189 residues: Adenylate kinase homolog MTH_1663 (189 aa).

Residue 12–20 coordinates ATP; sequence GVPGTGKTT.

The protein belongs to the archaeal adenylate kinase family.

This is Adenylate kinase homolog MTH_1663 from Methanothermobacter thermautotrophicus (strain ATCC 29096 / DSM 1053 / JCM 10044 / NBRC 100330 / Delta H) (Methanobacterium thermoautotrophicum).